The sequence spans 180 residues: Vacuolar transporter chaperone complex subunit 1 (180 aa).

Residues 1–70 (MASVIEKGLA…PKTFFANERT (70 aa)) lie on the Cytoplasmic side of the membrane. A helical transmembrane segment spans residues 71–91 (FLKWMSISVMIGMMSLTLLNF). Over 92–100 (GDTSSNASE) the chain is Vacuolar. A helical transmembrane segment spans residues 101 to 121 (LAGLVLLPVSILFMIHSLFVF). Over 122–140 (KDRANKIYMREPMRYDDTK) the chain is Cytoplasmic. Residues 141–161 (GPTILVLVLGVSLGIAAIFSV) form a helical membrane-spanning segment. Over 162 to 180 (QKQYYRTASSSFNDGPRFS) the chain is Vacuolar.

It belongs to the VTC1 family. As to quaternary structure, the VTC core complex is an integral membrane heterooligomer composed of at least the catalytic subunit vtc4 and the accessory subunits vtc1 and vtc2. vtc1 is a small membrane protein without hydrophilic domain. Vtc2 and vtc4 are related and have 2 hydrophilic domains that face the cytosol, an N-terminal SPX domain and the central core domain. The central core in vtc4 is the catalytic domain.

Its subcellular location is the acidocalcisome membrane. Accessory subunit of the vacuolar transporter chaperone (VTC) complex. The VTC complex acts as a vacuolar polyphosphate polymerase that catalyzes the synthesis of inorganic polyphosphate (polyP) via transfer of phosphate from ATP to a growing polyP chain, releasing ADP. VTC exposes its catalytic domain vtc4 to the cytosol, where the growing polyP chain winds through a tunnel-shaped pocket, integrating cytoplasmic polymer synthesis with polyP membrane translocation. The VTC complex carries 9 vacuolar transmembrane domains, which are likely to constitute the translocation channel into the organelle lumen. PolyP synthesis is tightly coupled to its transport into the vacuole lumen, in order to avoid otherwise toxic intermediates in the cytosol, and it depends on the proton gradient across the membrane, formed by V-ATPase. VTC1 contributes only 3 transmembrane domains to the complex. The VTC complex also plays a role in vacuolar membrane fusion. This Trypanosoma brucei brucei (strain 927/4 GUTat10.1) protein is Vacuolar transporter chaperone complex subunit 1 (VTC1).